The primary structure comprises 299 residues: Putative KilA-N domain-containing protein R879 (299 aa).

Residues Met1 to Tyr75 form the KilA-N domain. Residues His76–Lys150 are a coiled coil.

This chain is Putative KilA-N domain-containing protein R879, found in Acanthamoeba polyphaga mimivirus (APMV).